The sequence spans 216 residues: Ras-related protein Rab-5C (216 aa).

GTP is bound by residues Ser30, Ala31, Gly33, Lys34, Ser35, Ser36, His47, Glu48, Thr53, and Gly79. Ser35 provides a ligand contact to Mg(2+). Short sequence motifs (switch) lie at residues 45 to 57 (QFHEYQESTIGAA) and 78 to 94 (AGQERYHSLAPMYYRGA). Thr53 provides a ligand contact to Mg(2+). At Ser85 the chain carries Phosphoserine. Residues Asn134, Lys135, Asp137, Ala165, and Lys166 each contribute to the GTP site. The tract at residues 185-216 (NEPQNAAGAPSRNRGVDLQENSPASRSQCCSN) is disordered. Positions 203-216 (QENSPASRSQCCSN) are enriched in polar residues. S-geranylgeranyl cysteine attachment occurs at residues Cys213 and Cys214.

Belongs to the small GTPase superfamily. Rab family. In terms of assembly, interacts with EEA1 and INCA1. Interacts with GDI1, GDI2, CHML and CHM; phosphorylation at Ser-85 disrupts this interaction. The cofactor is Mg(2+). In terms of processing, phosphorylation of Ser-85 in the switch II region by LRRK2 prevents the association of RAB regulatory proteins, including CHM, CHML and RAB GDP dissociation inhibitors GDI1 and GDI2.

The protein resides in the cell membrane. It is found in the early endosome membrane. It localises to the melanosome. It carries out the reaction GTP + H2O = GDP + phosphate + H(+). Its activity is regulated as follows. Regulated by guanine nucleotide exchange factors (GEFs) which promote the exchange of bound GDP for free GTP. Regulated by GTPase activating proteins (GAPs) which increase the GTP hydrolysis activity. Inhibited by GDP dissociation inhibitors (GDIs). In terms of biological role, the small GTPases Rab are key regulators of intracellular membrane trafficking, from the formation of transport vesicles to their fusion with membranes. Rabs cycle between an inactive GDP-bound form and an active GTP-bound form that is able to recruit to membranes different sets of downstream effectors directly responsible for vesicle formation, movement, tethering and fusion. This Canis lupus familiaris (Dog) protein is Ras-related protein Rab-5C (RAB5C).